The chain runs to 237 residues: Peptidase E (237 aa).

Catalysis depends on charge relay system residues S122, D137, and H159.

Belongs to the peptidase S51 family.

It localises to the cytoplasm. The enzyme catalyses Dipeptidase E catalyzes the hydrolysis of dipeptides Asp-|-Xaa. It does not act on peptides with N-terminal Glu, Asn or Gln, nor does it cleave isoaspartyl peptides.. Functionally, hydrolyzes dipeptides containing N-terminal aspartate residues. May play a role in allowing the cell to use peptide aspartate to spare carbon otherwise required for the synthesis of the aspartate family of amino acids. This Shewanella baltica (strain OS155 / ATCC BAA-1091) protein is Peptidase E.